The chain runs to 141 residues: Hemoglobin subunit alpha (141 aa).

The Globin domain occupies 1–141 (VLSAADKGHV…VSTVLTSKYR (141 aa)). Serine 3 is subject to Phosphoserine. 2 positions are modified to N6-succinyllysine: lysine 7 and lysine 11. The residue at position 16 (lysine 16) is an N6-acetyllysine; alternate. At lysine 16 the chain carries N6-succinyllysine; alternate. Tyrosine 24 is modified (phosphotyrosine). Residue serine 35 is modified to Phosphoserine. Lysine 40 carries the post-translational modification N6-succinyllysine. Position 49 is a phosphoserine (serine 49). An O2-binding site is contributed by histidine 58. Residue histidine 87 participates in heme b binding. Serine 102 is modified (phosphoserine). The residue at position 108 (threonine 108) is a Phosphothreonine. Residue serine 124 is modified to Phosphoserine. 2 positions are modified to phosphothreonine: threonine 134 and threonine 137. Serine 138 bears the Phosphoserine mark.

It belongs to the globin family. In terms of assembly, heterotetramer of two alpha chains and two beta chains. As to expression, red blood cells.

Functionally, involved in oxygen transport from the lung to the various peripheral tissues. In terms of biological role, hemopressin acts as an antagonist peptide of the cannabinoid receptor CNR1. Hemopressin-binding efficiently blocks cannabinoid receptor CNR1 and subsequent signaling. The chain is Hemoglobin subunit alpha (HBA) from Macropus giganteus (Eastern gray kangaroo).